The following is a 310-amino-acid chain: Tyrosine recombinase XerC (310 aa).

A Core-binding (CB) domain is found at Asn-11 to Ile-97. The region spanning Pro-118 to Asp-298 is the Tyr recombinase domain. Residues Arg-157, Lys-181, His-250, Arg-253, and His-276 contribute to the active site. The active-site O-(3'-phospho-DNA)-tyrosine intermediate is the Tyr-285.

The protein belongs to the 'phage' integrase family. XerC subfamily. In terms of assembly, forms a cyclic heterotetrameric complex composed of two molecules of XerC and two molecules of XerD.

It is found in the cytoplasm. Site-specific tyrosine recombinase, which acts by catalyzing the cutting and rejoining of the recombining DNA molecules. The XerC-XerD complex is essential to convert dimers of the bacterial chromosome into monomers to permit their segregation at cell division. It also contributes to the segregational stability of plasmids. The protein is Tyrosine recombinase XerC of Vibrio parahaemolyticus serotype O3:K6 (strain RIMD 2210633).